The chain runs to 232 residues: Ribose-5-phosphate isomerase A (232 aa).

Substrate-binding positions include 28 to 31 (TGST), 83 to 86 (DGAD), and 96 to 99 (KGGG). Catalysis depends on E105, which acts as the Proton acceptor. K123 contacts substrate.

Belongs to the ribose 5-phosphate isomerase family. In terms of assembly, homodimer.

It catalyses the reaction aldehydo-D-ribose 5-phosphate = D-ribulose 5-phosphate. It participates in carbohydrate degradation; pentose phosphate pathway; D-ribose 5-phosphate from D-ribulose 5-phosphate (non-oxidative stage): step 1/1. In terms of biological role, catalyzes the reversible conversion of ribose-5-phosphate to ribulose 5-phosphate. The polypeptide is Ribose-5-phosphate isomerase A (Rhodopseudomonas palustris (strain ATCC BAA-98 / CGA009)).